Reading from the N-terminus, the 224-residue chain is Small ribosomal subunit protein uS3 (224 aa).

The KH type-2 domain maps to 39-107; the sequence is IREFLKKKPS…DVWVEIAEVK (69 aa).

Belongs to the universal ribosomal protein uS3 family. Part of the 30S ribosomal subunit. Forms a tight complex with proteins S10 and S14.

In terms of biological role, binds the lower part of the 30S subunit head. Binds mRNA in the 70S ribosome, positioning it for translation. This chain is Small ribosomal subunit protein uS3, found in Chlamydia trachomatis serovar L2 (strain ATCC VR-902B / DSM 19102 / 434/Bu).